Consider the following 217-residue polypeptide: Yop proteins translocation protein R (217 aa).

The next 4 helical transmembrane spans lie at 11–31, 53–73, 157–177, and 181–201; these read IIVLSLLTLLPLISVMATSFV, MAMYGLAIILSLYVMAPVGFA, IGFLIYLPFIVIDLVISNILL, and MMMVSPMTISLPFKLLLFVLL.

The protein belongs to the FliP/MopC/SpaP family.

The protein localises to the cell membrane. Functionally, component of the yop secretion machinery. May have a role in the negative pathway regulation of yop expression controlled by calcium. The polypeptide is Yop proteins translocation protein R (yscR) (Yersinia pestis).